The sequence spans 250 residues: Ribosomal RNA small subunit methyltransferase J (250 aa).

S-adenosyl-L-methionine contacts are provided by residues 101 to 102 (RD), 117 to 118 (ER), 153 to 154 (SS), and Asp-171.

The protein belongs to the methyltransferase superfamily. RsmJ family.

It localises to the cytoplasm. The enzyme catalyses guanosine(1516) in 16S rRNA + S-adenosyl-L-methionine = N(2)-methylguanosine(1516) in 16S rRNA + S-adenosyl-L-homocysteine + H(+). Its function is as follows. Specifically methylates the guanosine in position 1516 of 16S rRNA. The protein is Ribosomal RNA small subunit methyltransferase J of Klebsiella pneumoniae (strain 342).